The chain runs to 674 residues: Regulator of G-protein signaling 9 (674 aa).

The 76-residue stretch at 30 to 105 folds into the DEP domain; it reads PETGVRMQNQ…PDGSLYRFQT (76 aa). The 62-residue stretch at 219 to 280 folds into the G protein gamma domain; sequence KQTVVAVKKE…NPWITDDTQF (62 aa). Residues 298–413 enclose the RGS domain; sequence RWAFNFSELI…YARYLKSPIY (116 aa). Residues 533-573 are disordered; sequence SSGLEQKGECSGSMAPRGPSVTESSEASLDTSWPRSRPRAP. Polar residues predominate over residues 553 to 565; the sequence is VTESSEASLDTSW.

As to quaternary structure, heterodimer with GNB5. Interacts with RGS7BP, leading to regulate the subcellular location of the heterodimer formed with GNB5. Component of the RGS9-1-Gbeta5 complex composed of RGS9 (RGS9-1), Gbeta5 (GNB5) and RGS9BP. Interacts with PDE6G and GNAT1. Post-translationally, retinal isoform 3 is light-dependent phosphorylated at 'Ser-478'. Phosphorylation is decreased by light exposition. As to expression, highly expressed in the caudate and putamen, lower levels found in the hypothalamus and nucleus accumbens and very low levels in cerebellum. Not expressed in globus pallidus or cingulate cortex. Isoform 2 is expressed predominantly in pineal gland and retina. Isoform 3 is expressed in retina (abundant in photoreceptors).

It is found in the membrane. Its function is as follows. Inhibits signal transduction by increasing the GTPase activity of G protein alpha subunits thereby driving them into their inactive GDP-bound form. Binds to GNAT1. Involved in phototransduction; key element in the recovery phase of visual transduction. The polypeptide is Regulator of G-protein signaling 9 (RGS9) (Homo sapiens (Human)).